We begin with the raw amino-acid sequence, 466 residues long: Cysteine--tRNA ligase (466 aa).

C33 is a Zn(2+) binding site. Positions 35-45 (PTVYDYAHIGN) match the 'HIGH' region motif. C221, H246, and E250 together coordinate Zn(2+). The short motif at 279–283 (KMSKS) is the 'KMSKS' region element. Residue K282 participates in ATP binding.

This sequence belongs to the class-I aminoacyl-tRNA synthetase family. In terms of assembly, monomer. It depends on Zn(2+) as a cofactor.

It localises to the cytoplasm. The catalysed reaction is tRNA(Cys) + L-cysteine + ATP = L-cysteinyl-tRNA(Cys) + AMP + diphosphate. The sequence is that of Cysteine--tRNA ligase from Rhizobium meliloti (strain 1021) (Ensifer meliloti).